We begin with the raw amino-acid sequence, 1132 residues long: DNA-directed RNA polymerase subunit beta (1132 aa).

This sequence belongs to the RNA polymerase beta chain family. In terms of assembly, the RNAP catalytic core consists of 2 alpha, 1 beta, 1 beta' and 1 omega subunit. When a sigma factor is associated with the core the holoenzyme is formed, which can initiate transcription.

The enzyme catalyses RNA(n) + a ribonucleoside 5'-triphosphate = RNA(n+1) + diphosphate. Its function is as follows. DNA-dependent RNA polymerase catalyzes the transcription of DNA into RNA using the four ribonucleoside triphosphates as substrates. The chain is DNA-directed RNA polymerase subunit beta from Carboxydothermus hydrogenoformans (strain ATCC BAA-161 / DSM 6008 / Z-2901).